The primary structure comprises 310 residues: Syntaxin-related protein KNOLLE (310 aa).

M1 is modified (N-acetylmethionine). The Cytoplasmic segment spans residues 1–283 (MNDLMTKSFM…AKSHQRNSRK (283 aa)). Residues 94–159 (NEIVSGLRKA…FQGLRQKMMS (66 aa)) adopt a coiled-coil conformation. One can recognise a t-SNARE coiled-coil homology domain in the interval 212-274 (VVEIQDRYDA…ADGANELKTA (63 aa)). A helical; Anchor for type IV membrane protein transmembrane segment spans residues 284–304 (WMCIGIIVLLLIILIVVIPII). Residues 305-310 (TSFSSS) lie on the Vesicular side of the membrane.

The protein belongs to the syntaxin family. In terms of assembly, interacts with SNAP33 and/or NPSN11 to form a t-SNARE complex and with KEULE. As to expression, abundant in flowers and developing siliques. A low level expression is seen in the seedlings, roots, and leaves.

The protein localises to the membrane. Functionally, involved in cytokinesis. Acts as a cell plate-specific syntaxin, required for the fusion of vesicles at the plane of cell division. This chain is Syntaxin-related protein KNOLLE (KN), found in Arabidopsis thaliana (Mouse-ear cress).